Here is an 813-residue protein sequence, read N- to C-terminus: MKFGKEFSSQMVPEWQQAYMDYDFLKTLLKEIITFKRRTNNAPSHGGAKTGGGLNRKLTLYRAFSGLVSTPRHKRSNSSHDVEEGVQLTGSMRSGPILVNTTASHGYETTFLMAAEEGGEYELVFFRRLDDEFNKVDKFYRKKVEEVLKEAAMLNKQMDALIAFRVKVENPDGWRWEERTVEMTRLASDIATSAAALSASTPAGAKSMKVRSQEHMEAIQEGGSSRAGLMEDDEEDEDEQNETSVVSTGAIDNETTTSRMRGARPSPIDVLGRVKINNTKETPRSTIKGVLKVSKQTDLKFSRENLMKVEESLKRAFIEFYQKLRLLKSYSFLNVLAFSKILKKYDKITSRDATKPYMKVVDSSYLGSSDEVMRLMERVEATFIKHFANANRAKAMNILRPKAKRERHRITFSTGFSAGCVFSLIVALVAIIRTRNLLEMEGQKEYMNTMFPLYSLFGFIVLHIIVYAANIYYWRRYRVNYSFIFGFKQGTELGYRQVLLVGFSIGVLALLCVLANLDMEADPKTKAYQARTEILPLILLAAMFIVLVLPFNYFYRSSRFFFLTCLFHCLAAPLYKVTLPDFFLGDQLTSQVQAIRSIEFYICYYGWGDFRHRKSTCKESDVYNTFFFIVAVIPYVSRLLQCLRRLFEEKNPEQGYNGLKYFLTIVAVCLRTAYSIQKGQVAWRVLAAVFSFIAAIFCTYWDFVHDWGLLNRTSKNRWLRDKLLVPQKKVYFIAMVLNVLLRFAWIQTVLDFNFSFMHRQTMVAIVASLEIIRRGIWNFFRLENEHLNNVGKYRAFKSVPLPFNYDEDDDKDN.

The SPX domain occupies Met-1 to Lys-359. At Met-1–Thr-411 the chain is on the cytoplasmic side. Residues Glu-214–Ser-266 are disordered. The segment covering Met-230–Asn-241 has biased composition (acidic residues). A helical transmembrane segment spans residues Phe-412–Ile-432. Over Arg-433–Met-450 the chain is Extracellular. Residues Phe-451–Ile-471 form a helical membrane-spanning segment. Residues Tyr-472–Arg-496 are Cytoplasmic-facing. Residues Gln-497–Leu-517 traverse the membrane as a helical segment. Residues Asp-518–Glu-533 are Extracellular-facing. A helical membrane pass occupies residues Ile-534–Phe-554. Topologically, residues Tyr-555–Arg-684 are cytoplasmic. One can recognise an EXS domain in the interval Lys-618–Asn-813. The chain crosses the membrane as a helical span at residues Val-685–His-705. The Extracellular portion of the chain corresponds to Asp-706–Lys-729. The chain crosses the membrane as a helical span at residues Val-730–Leu-750. Topologically, residues Asp-751–Asn-813 are cytoplasmic.

It belongs to the SYG1 (TC 2.A.94) family. In terms of tissue distribution, expressed in vascular cylinder of roots, leaves and filaments. Expressed in receptacle and stigma apex.

It localises to the cell membrane. In terms of biological role, may transport inorganic phosphate (Pi). The protein is Phosphate transporter PHO1 homolog 3 (PHO1;H3) of Arabidopsis thaliana (Mouse-ear cress).